The chain runs to 344 residues: 4-dimethylallyltryptophan N-methyltransferase easF (344 aa).

Belongs to the methyltransferase superfamily. Homodimer.

It catalyses the reaction 4-(3-methylbut-2-enyl)-L-tryptophan + S-adenosyl-L-methionine = 4-(3-methylbut-2-enyl)-L-abrine + S-adenosyl-L-homocysteine + H(+). The protein operates within alkaloid biosynthesis; ergot alkaloid biosynthesis. 4-dimethylallyltryptophan N-methyltransferase; part of the gene cluster that mediates the biosynthesis of fungal ergot alkaloid ergovaline, the predominant ergopeptine product in E.festucae var. lolii. DmaW catalyzes the first step of ergot alkaloid biosynthesis by condensing dimethylallyl diphosphate (DMAP) and tryptophan to form 4-dimethylallyl-L-tryptophan. The second step is catalyzed by the methyltransferase easF that methylates 4-dimethylallyl-L-tryptophan in the presence of S-adenosyl-L-methionine, resulting in the formation of 4-dimethylallyl-L-abrine. The catalase easC and the FAD-dependent oxidoreductase easE then transform 4-dimethylallyl-L-abrine to chanoclavine-I which is further oxidized by easD in the presence of NAD(+), resulting in the formation of chanoclavine-I aldehyde. Agroclavine dehydrogenase easG then mediates the conversion of chanoclavine-I aldehyde to agroclavine via a non-enzymatic adduct reaction: the substrate is an iminium intermediate that is formed spontaneously from chanoclavine-I aldehyde in the presence of glutathione. The presence of easA is not required to complete this reaction. Further conversion of agroclavine to paspalic acid is a two-step process involving oxidation of agroclavine to elymoclavine and of elymoclavine to paspalic acid, the second step being performed by the elymoclavine oxidase cloA. Paspalic acid is then further converted to D-lysergic acid. Ergovaline is assembled from D-lysergic acid and three different amino acids by the D-lysergyl-peptide-synthetase composed of a monomudular (lpsB) and a trimodular (lpsA) nonribosomal peptide synthetase subunit. The polypeptide is 4-dimethylallyltryptophan N-methyltransferase easF (Epichloe festucae var. lolii (Neotyphodium lolii)).